A 64-amino-acid chain; its full sequence is Potassium channel toxin alpha-KTx J123 (64 aa).

Residues 1-21 (MNKVYLVAVLVLFLALTINES) form the signal peptide. Intrachain disulfides connect Cys30–Cys52, Cys37–Cys60, and Cys41–Cys62.

It belongs to the short scorpion toxin superfamily. Potassium channel inhibitor family. Alpha-KTx 11 subfamily. Expressed by the venom gland.

It is found in the secreted. Its function is as follows. This recombinant toxin inhibits mammalian voltage-gated potassium channels Kv1.3/KCNA3 (IC(50)=0.79 nM) and Kv1.2/KCNA2 (IC(50)=26.4 nM). The sequence is that of Potassium channel toxin alpha-KTx J123 from Olivierus martensii (Manchurian scorpion).